A 445-amino-acid polypeptide reads, in one-letter code: 3-phosphoshikimate 1-carboxyvinyltransferase (445 aa).

The 3-phosphoshikimate site is built by Lys-28, Ser-29, and Arg-33. Lys-28 serves as a coordination point for phosphoenolpyruvate. Positions 101 and 129 each coordinate phosphoenolpyruvate. 3-phosphoshikimate-binding residues include Ser-175, Gln-177, Asp-328, and Lys-355. Phosphoenolpyruvate is bound at residue Gln-177. Catalysis depends on Asp-328, which acts as the Proton acceptor. Phosphoenolpyruvate contacts are provided by Arg-359 and Arg-402.

The protein belongs to the EPSP synthase family. Monomer.

It is found in the cytoplasm. It catalyses the reaction 3-phosphoshikimate + phosphoenolpyruvate = 5-O-(1-carboxyvinyl)-3-phosphoshikimate + phosphate. It participates in metabolic intermediate biosynthesis; chorismate biosynthesis; chorismate from D-erythrose 4-phosphate and phosphoenolpyruvate: step 6/7. In terms of biological role, catalyzes the transfer of the enolpyruvyl moiety of phosphoenolpyruvate (PEP) to the 5-hydroxyl of shikimate-3-phosphate (S3P) to produce enolpyruvyl shikimate-3-phosphate and inorganic phosphate. This chain is 3-phosphoshikimate 1-carboxyvinyltransferase, found in Rhodopseudomonas palustris (strain HaA2).